Consider the following 377-residue polypeptide: MSSPDGGYGSDDQNQGKCSVPIMMSGLGQCQWSEPMTSLGEGKLKSDANSRSKAEGRIRRPMNAFMVWAKDERKRLAQQNPDLHNAELSKMLGKSWKALSLAEKRPFVEEAERLRVQHMQDHPNYKYRPRRRKQVKRMKRAENGFMHMTEAQESAVMGTDGRMCLENFNLGFHEQTYPQLPQASHYREPQAMAPHYDGYSLPTPESSPLDLAEADPVFFTSPAQDECQMMPYSYNSSYTHQHNSGASMLVRQMPQTEQIGEGSPVEGMMACQSSPHMYYGQMYLPGSTRHHQHPQAGQPSPPPEAQQLGRADQTQQADMMAEDRTEFEQYLSYVSKSDLGMNYHGQESVGPTADNGPISSVLSDATTAVYYCNYPSA.

2 disordered regions span residues 1 to 20 (MSSPDGGYGSDDQNQGKCSV) and 31 to 57 (QWSEPMTSLGEGKLKSDANSRSKAEGR). Positions 42–57 (GKLKSDANSRSKAEGR) are enriched in basic and acidic residues. Positions 58–126 (IRRPMNAFMV…QHMQDHPNYK (69 aa)) form a DNA-binding region, HMG box. One can recognise a Sox C-terminal domain in the interval 262–376 (GSPVEGMMAC…TAVYYCNYPS (115 aa)). The disordered stretch occupies residues 282–321 (MYLPGSTRHHQHPQAGQPSPPPEAQQLGRADQTQQADMMA). The short motif at 325 to 333 (TEFEQYLSY) is the 9aaTAD element. The tract at residues 326-331 (EFEQYL) is required for transcriptional activity and interaction with ctnnb1.

As to quaternary structure, interacts (via C-terminus) with ctnnb1/beta-catenin (via Armadillo repeats); this interaction is required for inhibition of wnt-signaling. Enriched in the embryonic endoderm. Expressed in the embryonic gut, with strong expression in the posterior gut during tailbud stages. Expressed at a low level in the adult kidney and spleen.

Its subcellular location is the nucleus. In terms of biological role, transcription activator. Binds to the DNA sequence 5'-AACAAT-3'. All of the sox17 proteins are required for embryonic endoderm development and gastrulation movements, and show some redundancy in function. In addition, the sox17 proteins have distinct but overlapping roles in later gut development. Acts downstream of vegt-signaling in endoderm differentiation to induce a range of endodermal genes both directly (including endodermin and dhh/chh) and indirectly. Also represses wnt-responsive genes to inhibit wnt/beta-catenin signaling. In Xenopus laevis (African clawed frog), this protein is Transcription factor Sox-17-alpha-B (sox17a-b).